The following is a 256-amino-acid chain: Thiazole synthase (256 aa).

The active-site Schiff-base intermediate with DXP is the lysine 95. Residues glycine 156, 182-183 (AG), and 204-205 (NT) contribute to the 1-deoxy-D-xylulose 5-phosphate site.

Belongs to the ThiG family. As to quaternary structure, homotetramer. Forms heterodimers with either ThiH or ThiS.

The protein resides in the cytoplasm. It catalyses the reaction [ThiS sulfur-carrier protein]-C-terminal-Gly-aminoethanethioate + 2-iminoacetate + 1-deoxy-D-xylulose 5-phosphate = [ThiS sulfur-carrier protein]-C-terminal Gly-Gly + 2-[(2R,5Z)-2-carboxy-4-methylthiazol-5(2H)-ylidene]ethyl phosphate + 2 H2O + H(+). Its pathway is cofactor biosynthesis; thiamine diphosphate biosynthesis. Its function is as follows. Catalyzes the rearrangement of 1-deoxy-D-xylulose 5-phosphate (DXP) to produce the thiazole phosphate moiety of thiamine. Sulfur is provided by the thiocarboxylate moiety of the carrier protein ThiS. In vitro, sulfur can be provided by H(2)S. The protein is Thiazole synthase of Klebsiella pneumoniae subsp. pneumoniae (strain ATCC 700721 / MGH 78578).